The sequence spans 298 residues: Lipoyl synthase (298 aa).

Positions 40, 45, 51, 67, 71, 74, and 280 each coordinate [4Fe-4S] cluster. The region spanning 53 to 269 (AVRRTATFMI…KEIALSKGFT (217 aa)) is the Radical SAM core domain.

Belongs to the radical SAM superfamily. Lipoyl synthase family. [4Fe-4S] cluster serves as cofactor.

Its subcellular location is the cytoplasm. It catalyses the reaction [[Fe-S] cluster scaffold protein carrying a second [4Fe-4S](2+) cluster] + N(6)-octanoyl-L-lysyl-[protein] + 2 oxidized [2Fe-2S]-[ferredoxin] + 2 S-adenosyl-L-methionine + 4 H(+) = [[Fe-S] cluster scaffold protein] + N(6)-[(R)-dihydrolipoyl]-L-lysyl-[protein] + 4 Fe(3+) + 2 hydrogen sulfide + 2 5'-deoxyadenosine + 2 L-methionine + 2 reduced [2Fe-2S]-[ferredoxin]. Its pathway is protein modification; protein lipoylation via endogenous pathway; protein N(6)-(lipoyl)lysine from octanoyl-[acyl-carrier-protein]. Functionally, catalyzes the radical-mediated insertion of two sulfur atoms into the C-6 and C-8 positions of the octanoyl moiety bound to the lipoyl domains of lipoate-dependent enzymes, thereby converting the octanoylated domains into lipoylated derivatives. This Geobacillus sp. (strain WCH70) protein is Lipoyl synthase.